The primary structure comprises 106 residues: Large ribosomal subunit protein uL24 (106 aa).

The protein belongs to the universal ribosomal protein uL24 family. Part of the 50S ribosomal subunit.

Functionally, one of two assembly initiator proteins, it binds directly to the 5'-end of the 23S rRNA, where it nucleates assembly of the 50S subunit. Its function is as follows. One of the proteins that surrounds the polypeptide exit tunnel on the outside of the subunit. The sequence is that of Large ribosomal subunit protein uL24 from Bordetella avium (strain 197N).